The sequence spans 372 residues: 3-galactosyl-N-acetylglucosaminide 4-alpha-L-fucosyltransferase FUT3 (372 aa).

Residues 1-15 are Cytoplasmic-facing; sequence MDPLGAAKPQWPWRR. The chain crosses the membrane as a helical; Signal-anchor for type II membrane protein span at residues 16–34; it reads CLAALLFQLLVAVCFFSYL. Over 35–372 the chain is Lumenal; sequence RVSRDDATGS…TMRSIAAWFT (338 aa). The disordered stretch occupies residues 40–69; that stretch reads DATGSPRPGLMAVEPVTGAPSGSSRQDTTP. N-linked (GlcNAc...) asparagine glycans are attached at residues Asn-165 and Asn-196.

This sequence belongs to the glycosyltransferase 10 family. Post-translationally, glycosylated.

It is found in the golgi apparatus. Its subcellular location is the golgi stack membrane. It catalyses the reaction a beta-D-galactosyl-(1-&gt;3)-N-acetyl-beta-D-glucosaminyl derivative + GDP-beta-L-fucose = a beta-D-galactosyl-(1-&gt;3)-[alpha-L-fucosyl-(1-&gt;4)]-N-acetyl-beta-D-glucosaminyl derivative + GDP + H(+). The enzyme catalyses an N-acetyl-alpha-neuraminyl-(2-&gt;3)-beta-D-galactosyl-(1-&gt;4)-N-acetyl-beta-D-glucosaminyl derivative + GDP-beta-L-fucose = an alpha-Neu5Ac-(2-&gt;3)-beta-D-Gal-(1-&gt;4)-[alpha-L-Fuc-(1-&gt;3)]-beta-D-GlcNAc derivative + GDP + H(+). The catalysed reaction is a beta-D-galactosyl-(1-&gt;4)-N-acetyl-beta-D-glucosaminyl derivative + GDP-beta-L-fucose = a beta-D-galactosyl-(1-&gt;4)-[alpha-L-fucosyl-(1-&gt;3)]-N-acetyl-beta-D-glucosaminyl derivative + GDP + H(+). It carries out the reaction an alpha-Neu5Ac-(2-&gt;3)-beta-D-Gal-(1-&gt;4)-beta-D-GlcNAc-(1-&gt;3)-beta-D-Gal-(1-&gt;4)-[alpha-L-Fuc-(1-&gt;3)]-beta-D-GlcNAc derivative + GDP-beta-L-fucose = an alpha-Neu5Ac-(2-&gt;3)-beta-D-Gal-(1-&gt;4)-[alpha-L-Fuc-(1-&gt;3)]-beta-D-GlcNAc-(1-&gt;3)-beta-D-Gal-(1-&gt;4)-[alpha-L-Fuc-(1-&gt;3)]-beta-D-GlcNAc derivative + GDP + H(+). It catalyses the reaction Lc4Cer + GDP-beta-L-fucose = a lactoside III(4)-a-Fuc-Lc4Cer + GDP + H(+). The enzyme catalyses a beta-D-Gal-(1-&gt;3)-beta-D-GlcNAc-(1-&gt;3)-beta-D-Gal-(1-&gt;4)-beta-D-Glc-(1&lt;-&gt;1')-Cer(d18:1(4E)) + GDP-beta-L-fucose = a III(4)-a-Fuc-Lc4Cer(d18:1(4E)) + GDP + H(+). The catalysed reaction is N-acetyl-alpha-neuraminosyl-(2-&gt;3)-beta-D-galactosyl-(1-&gt;3)-[N-acetyl-alpha-neuraminosyl-(2-&gt;6)]-N-acetyl-beta-D-glucosaminyl-(1-&gt;3)-beta-D-galactosyl-(1-&gt;4)-beta-D-glucosyl-(1&lt;-&gt;1')-N-acyl-sphing-4-enine + GDP-beta-L-fucose = N-acetyl-alpha-neuraminosyl-(2-&gt;3)-beta-D-galactosyl-(1-&gt;3)-alpha-L-fucosyl-(1-&gt;4)-[N-acetyl-alpha-neuraminosyl-(2-&gt;6)-N-acetyl-beta-D-glucosaminyl-(1-&gt;3)]-beta-D-galactosyl-(1-&gt;4)-beta-D-glucosyl-(1&lt;-&gt;1')-N-acyl-sphing-4-enine + GDP + H(+). It carries out the reaction N-acetyl-alpha-neuraminosyl-(2-&gt;3)-beta-D-galactosyl-(1-&gt;3)-N-acetyl-beta-D-glucosaminyl-(1-&gt;3)-beta-D-galactosyl-(1-&gt;4)-beta-D-glucosyl-(1&lt;-&gt;1')-N-acyl-sphing-4-enine + GDP-beta-L-fucose = N-acetyl-alpha-neuraminosyl-(2-&gt;3)-beta-D-galactosyl-(1-&gt;3)-alpha-L-fucosyl-(1-&gt;4)-[N-acetyl-beta-D-glucosaminyl-(1-&gt;3)]-beta-D-galactosyl-(1-&gt;4)-beta-D-glucosyl-(1&lt;-&gt;1')-N-acyl-sphing-4-enine + GDP + H(+). It catalyses the reaction beta-D-galactosyl-(1-&gt;3)-N-acetyl-D-glucosamine + GDP-beta-L-fucose = beta-D-galactosyl-(1-&gt;3)-[alpha-L-fucosyl-(1-&gt;4)]-N-acetyl-D-glucosamine + GDP + H(+). The enzyme catalyses alpha-L-Fuc-(1-&gt;2)-beta-D-Gal-(1-&gt;3)-D-GlcNAc + GDP-beta-L-fucose = alpha-L-Fuc-(1-&gt;2)-beta-D-Gal-(1-&gt;3)-[alpha-L-Fuc-(1-&gt;4)]-D-GlcNAc + GDP + H(+). The catalysed reaction is alpha-L-Fuc-(1-&gt;2)-beta-D-Gal-(1-&gt;4)-D-GlcNAc + GDP-beta-L-fucose = alpha-L-Fuc-(1-&gt;2)-beta-D-Gal-(1-&gt;4)-[alpha-L-Fuc-(1-&gt;3)]-D-GlcNAc + GDP + H(+). It carries out the reaction beta-D-galactosyl-(1-&gt;4)-N-acetyl-D-glucosamine + GDP-beta-L-fucose = beta-D-galactosyl-(1-&gt;4)-[alpha-L-fucosyl-(1-&gt;3)]-N-acetyl-D-glucosamine + GDP + H(+). It catalyses the reaction lactose + GDP-beta-L-fucose = beta-D-galactosyl-(1-&gt;4)-[alpha-L-fucosyl-(1-&gt;3)]-D-glucose + GDP + H(+). The enzyme catalyses an alpha-Neu5Ac-(2-&gt;3)-beta-D-Gal-(1-&gt;3)-D-GlcNAc derivative + GDP-beta-L-fucose = an alpha-Neu5Ac-(2-&gt;3)-beta-D-Gal-(1-&gt;3)-[alpha-L-Fuc-(1-&gt;4)]-beta-D-GlcNAc derivative + GDP + H(+). It participates in protein modification; protein glycosylation. Its function is as follows. Catalyzes the transfer of L-fucose, from a guanosine diphosphate-beta-L-fucose, to both the subterminal N-acetyl glucosamine (GlcNAc) of type 1 chain (beta-D-Gal-(1-&gt;3)-beta-D-GlcNAc) glycolipids and oligosaccharides via an alpha(1,4) linkage, and the subterminal glucose (Glc) or GlcNAc of type 2 chain (beta-D-Gal-(1-&gt;4)-beta-D-GlcNAc) oligosaccharides via an alpha(1,3) linkage, independently of the presence of terminal alpha-L-fucosyl-(1,2) moieties on the terminal galactose of these acceptors and participates in the blood groups Lewis determination and expression of Lewis a (Le(a)), lewis b (Le(b)), Lewis x/SSEA-1 (Le(x)) and lewis y (Le(y)) antigens. Also catalyzes the transfer of L-fucose to subterminal GlcNAc of sialyl- and disialyl-lactotetraosylceramide to produce sialyl Lewis a (sLe(a)) and disialyl Lewis a via an alpha(1,4) linkage and therefore may regulate cell surface sialyl Lewis a expression and consequently regulates adhesive properties to E-selectin, cell proliferation and migration. Catalyzes the transfer of an L-fucose to 3'-sialyl-N-acetyllactosamine by an alpha(1,3) linkage, which allows the formation of sialyl-Lewis x structure and therefore may regulate the sialyl-Lewis x surface antigen expression and consequently adhesive properties to E-selectin. Prefers type 1 chain over type 2 acceptors. Type 1 tetrasaccharide is a better acceptor than type 1 disaccharide suggesting that a beta anomeric configuration of GlcNAc in the substrate is preferred. Lewis-positive (Le(+)) individuals have an active enzyme while Lewis-negative (Le(-)) individuals have an inactive enzyme. The protein is 3-galactosyl-N-acetylglucosaminide 4-alpha-L-fucosyltransferase FUT3 of Pan troglodytes (Chimpanzee).